We begin with the raw amino-acid sequence, 199 residues long: NAD(P)H dehydrogenase (quinone) (199 aa).

A Flavodoxin-like domain is found at 4 to 190 (VLVLYHSMYG…AIARFQGKHV (187 aa)). FMN contacts are provided by residues 10 to 15 (SMYGHI) and 79 to 81 (TRF). An NAD(+)-binding site is contributed by Tyr12. Trp99 is a binding site for substrate. An FMN-binding site is contributed by His134.

This sequence belongs to the WrbA family. It depends on FMN as a cofactor.

It carries out the reaction a quinone + NADH + H(+) = a quinol + NAD(+). It catalyses the reaction a quinone + NADPH + H(+) = a quinol + NADP(+). The protein is NAD(P)H dehydrogenase (quinone) of Tolumonas auensis (strain DSM 9187 / NBRC 110442 / TA 4).